A 192-amino-acid polypeptide reads, in one-letter code: uncharacterized protein (192 aa).

The Nudix hydrolase domain maps to 29–160 (RRQAAVLIPL…PLDIQRRGHD (132 aa)). The short motif at 67–89 (GAVDSTDASLIAAALREAHEEVA) is the Nudix box element. Mg(2+) is bound by residues Glu83 and Glu87.

Belongs to the Nudix hydrolase family. PCD1 subfamily. Mn(2+) serves as cofactor. Requires Mg(2+) as cofactor.

Functionally, probably mediates the hydrolysis of some nucleoside diphosphate derivatives. This is an uncharacterized protein from Enterobacter sp. (strain 638).